The following is a 233-amino-acid chain: 1-(5-phosphoribosyl)-5-[(5-phosphoribosylamino)methylideneamino] imidazole-4-carboxamide isomerase (233 aa).

Catalysis depends on D8, which acts as the Proton acceptor. D125 serves as the catalytic Proton donor.

This sequence belongs to the HisA/HisF family.

The protein localises to the cytoplasm. It catalyses the reaction 1-(5-phospho-beta-D-ribosyl)-5-[(5-phospho-beta-D-ribosylamino)methylideneamino]imidazole-4-carboxamide = 5-[(5-phospho-1-deoxy-D-ribulos-1-ylimino)methylamino]-1-(5-phospho-beta-D-ribosyl)imidazole-4-carboxamide. It participates in amino-acid biosynthesis; L-histidine biosynthesis; L-histidine from 5-phospho-alpha-D-ribose 1-diphosphate: step 4/9. The protein is 1-(5-phosphoribosyl)-5-[(5-phosphoribosylamino)methylideneamino] imidazole-4-carboxamide isomerase of Thermococcus kodakarensis (strain ATCC BAA-918 / JCM 12380 / KOD1) (Pyrococcus kodakaraensis (strain KOD1)).